The following is a 155-amino-acid chain: MSRRGTAEKKTAKYDPIYRNRLVNMLVNRILKHGKKSLAYQIIYRAVKKIQQKTETNPLSVLRQAIRGVTPDITVKARRVGGSTHQVPVEIGSTQGKALAVRWLLAASRKRPGRDMAFKLSSELVDAAKGSGDAIRKKEETHRMAEANRAFAHFR.

Belongs to the universal ribosomal protein uS7 family. As to quaternary structure, part of the 30S ribosomal subunit.

It is found in the plastid. Its function is as follows. One of the primary rRNA binding proteins, it binds directly to 16S rRNA where it nucleates assembly of the head domain of the 30S subunit. This chain is Small ribosomal subunit protein uS7cz/uS7cy (rps7-A), found in Cuscuta exaltata (Tall dodder).